We begin with the raw amino-acid sequence, 623 residues long: Lamin-B2.L (623 aa).

A compositionally biased stretch (low complexity) spans 1 to 18 (MATTTPSRSTRSSMQSPA). The interval 1-30 (MATTTPSRSTRSSMQSPARGTSTPLSPTRI) is disordered. A head region spans residues 2–27 (ATTTPSRSTRSSMQSPARGTSTPLSP). The segment covering 19–30 (RGTSTPLSPTRI) has biased composition (polar residues). At Ser26 the chain carries Phosphoserine. The coil 1A stretch occupies residues 28–64 (TRISRLQEKEELRHLNDRLAVYIDRVRALELENDRLM). The IF rod domain maps to 35–391 (EKEELRHLND…KLLEGEEERL (357 aa)). The interval 64–74 (MVKISEKEEVT) is linker 1. Residues 75 to 211 (TREVSGIKNL…QSLQEEMDFR (137 aa)) form a coil 1B region. The linker 2 stretch occupies residues 212–235 (KNIYEEESRETRKRHERRIVEVDR). The tract at residues 236–378 (GHHYDYESKL…VKLALDLEIN (143 aa)) is coil 2. Residues 380–592 (YRKLLEGEEE…VTKSVLRNVE (213 aa)) form a tail region. Disordered regions lie at residues 388 to 473 (EERL…LSQQ) and 591 to 623 (VEEEEDEDADFGEEDLFHQQGDPRTTSRGCSVM). Ser396 carries the post-translational modification Phosphoserine. Residues 398-416 (ESRVTVSRATSSSSSATRT) are compositionally biased toward low complexity. Positions 420–425 (KRRRVE) match the Nuclear localization signal motif. Positions 443–473 (LGSSRITASEGSSRTITSGQSSTTRFHLSQQ) are enriched in polar residues. The 118-residue stretch at 468–585 (FHLSQQASAT…EEVAVRTVTK (118 aa)) folds into the LTD domain. A compositionally biased stretch (acidic residues) spans 592–604 (EEEEDEDADFGEE). The segment covering 612–623 (DPRTTSRGCSVM) has biased composition (polar residues). Cysteine methyl ester is present on Cys620. Residue Cys620 is the site of S-farnesyl cysteine attachment. Positions 621-623 (SVM) are cleaved as a propeptide — removed in mature form.

Belongs to the intermediate filament family. Phosphorylation plays a key role in lamin organization, subcellular localization and nuclear envelope disintegration. Phosphorylation by CDK1 at Ser-26 at the onset of mitosis drives lamin disassembly and nuclear envelope breakdown.

The protein resides in the nucleus lamina. Its subcellular location is the nucleus envelope. It localises to the nucleus. It is found in the nucleoplasm. The protein localises to the nucleus matrix. Functionally, lamins are intermediate filament proteins that assemble into a filamentous meshwork, and which constitute the major components of the nuclear lamina, a fibrous layer on the nucleoplasmic side of the inner nuclear membrane. Lamins provide a framework for the nuclear envelope, bridging the nuclear envelope and chromatin, thereby playing an important role in nuclear assembly, chromatin organization, nuclear membrane and telomere dynamics. The structural integrity of the lamina is strictly controlled by the cell cycle, as seen by the disintegration and formation of the nuclear envelope in prophase and telophase, respectively. The chain is Lamin-B2.L (lmnb2.L) from Xenopus laevis (African clawed frog).